Reading from the N-terminus, the 214-residue chain is Rho-related GTP-binding protein RhoJ (214 aa).

2 S-palmitoyl cysteine lipidation sites follow: Cys3 and Cys11. GTP-binding positions include 31–36, 46–53, 75–79, 133–136, and 177–178; these read AVGKTC, FPEEYVPT, DTAGQ, TQID, and AL. An Effector region motif is present at residues 50 to 58; the sequence is YVPTVFDHY. Cysteine methyl ester is present on Cys211. Cys211 carries the S-farnesyl cysteine lipid modification. A propeptide spans 212-214 (removed in mature form); sequence AII.

This sequence belongs to the small GTPase superfamily. Rho family. In terms of assembly, interacts with the CRIB domains of proteins such as Pak1 and Was/Wasp. Interacts with GLUL. Palmitoylated; regulates localization to the plasma membrane and may be mediated by GLUL. Highly expressed in heart with moderate levels in lung and liver. Very low levels detected in brain, spleen, skeletal muscle, kidney and testis.

Its subcellular location is the cell membrane. Plasma membrane-associated small GTPase specifically involved in angiogenesis. Required for endothelial cell migration during vascular development via its interaction with GLUL. Elicits the formation of F-actin-rich structures, thereby regulating endothelial cell migration. The sequence is that of Rho-related GTP-binding protein RhoJ (Rhoj) from Mus musculus (Mouse).